Reading from the N-terminus, the 45-residue chain is Large ribosomal subunit protein bL34c (45 aa).

Belongs to the bacterial ribosomal protein bL34 family.

It is found in the plastid. Its subcellular location is the chloroplast. In Emiliania huxleyi (Coccolithophore), this protein is Large ribosomal subunit protein bL34c.